A 61-amino-acid chain; its full sequence is Large ribosomal subunit protein uL30 (61 aa).

The protein belongs to the universal ribosomal protein uL30 family. Part of the 50S ribosomal subunit.

The protein is Large ribosomal subunit protein uL30 of Bifidobacterium adolescentis (strain ATCC 15703 / DSM 20083 / NCTC 11814 / E194a).